We begin with the raw amino-acid sequence, 563 residues long: uncharacterized protein (563 aa).

Belongs to the HyuB family.

This is an uncharacterized protein from Methanocaldococcus jannaschii (strain ATCC 43067 / DSM 2661 / JAL-1 / JCM 10045 / NBRC 100440) (Methanococcus jannaschii).